A 963-amino-acid polypeptide reads, in one-letter code: Thrombospondin-4 (963 aa).

Residues 1-26 (MPAPRAAAAAFLLLHLVLQPWQRTSA) form the signal peptide. A Laminin G-like domain is found at 29–194 (TPQVFDLLPS…LEELKLVVRG (166 aa)). The Cell attachment site motif lies at 138 to 140 (RGD). The region spanning 288–327 (PTRHCDSSPCFRGVRCTDTRDGFQCGPCPDGYTGNGITCS) is the EGF-like 1 domain. 21 disulfides stabilise this stretch: C292-C303, C297-C312, C315-C326, C332-C343, C337-C352, C355-C379, C385-C396, C390-C405, C408-C420, C426-C440, C434-C450, C452-C463, C479-C484, C489-C509, C525-C545, C548-C568, C584-C604, C607-C627, C645-C665, C685-C705, and C721-C942. Residues 328–365 (DVDECKYHPCYPGVRCVNLAPGFRCDACPVGFTGPMVQ) form the EGF-like 2; calcium-binding domain. Residues 381 to 418 (DVDECQNGACVLNSICINTLGSYRCGPCKPGYTGDQTR) enclose the EGF-like 3; calcium-binding domain. The EGF-like 4 domain maps to 422–464 (TERSCRNPEQNPCSVHAQCIEERQGDVTCVCGVGWAGDGYVCG). 8 TSP type-3 repeats span residues 465–497 (KDVD…NSGQ), 498–533 (EDAD…NIDQ), 534–556 (RNSD…NNDQ), 557–592 (KDTD…NRDQ), 593–615 (QDRD…NPNQ), 616–653 (SDVD…NSSQ), 654–693 (LDTD…NPAQ), and 694–729 (EDSN…EITL). The Cell attachment site motif lies at 564-566 (RGD). The segment at 579-676 (NILDNCPRVP…DDDDNDGIPD (98 aa)) is disordered. N-linked (GlcNAc...) asparagine glycans are attached at residues N614 and N650. Residues 642–654 (TDNCPTVINSSQL) show a composition bias toward polar residues. Residues 662–673 (GDECDDDDDNDG) show a composition bias toward acidic residues. One can recognise a TSP C-terminal domain in the interval 733 to 947 (RAYQTVVLDP…LKYRCNDTIP (215 aa)). A glycan (N-linked (GlcNAc...) asparagine) is linked at N943.

The protein belongs to the thrombospondin family. As to quaternary structure, homopentamer; disulfide-linked. Interacts with PTBP3. Interacts (via EGF-like 3; calcium-binding domain) with ATF6 and facilitates its processing, activation and nuclear translocation. Interacts with NOTCH1. In terms of tissue distribution, heart. Up-regulated in the heart in response to ischemic injury and pathology (at protein level). Astrocytes; expressed at high levels in subventricular zone (SVZ)-derived astrocytes and at low levels in cortical astrocytes. In response to peripheral nerve injury, significantly up-regulated in the dorsal spinal cord (at protein level).

Its subcellular location is the endoplasmic reticulum. It is found in the sarcoplasmic reticulum. It localises to the secreted. The protein localises to the extracellular space. The protein resides in the extracellular matrix. Functionally, adhesive glycoprotein that mediates cell-to-cell and cell-to-matrix interactions and is involved in various processes including cellular proliferation, migration, adhesion and attachment, inflammatory response to CNS injury, regulation of vascular inflammation and adaptive responses of the heart to pressure overload and in myocardial function and remodeling. Binds to structural extracellular matrix (ECM) proteins and modulates the ECM in response to tissue damage, contributing to cardioprotective and adaptive ECM remodeling. Plays a role in ER stress response, via its interaction with the activating transcription factor 6 alpha (ATF6) which produces adaptive ER stress response factors and protects myocardium from pressure overload. May contribute to spinal presynaptic hypersensitivity and neuropathic pain states after peripheral nerve injury. May play a role in regulating protective astrogenesis from the subventricular zone (SVZ) niche after injury in a NOTCH1-dependent manner. This is Thrombospondin-4 (Thbs4) from Mus musculus (Mouse).